We begin with the raw amino-acid sequence, 509 residues long: Protein WHAT'S THIS FACTOR 1 homolog, chloroplastic (509 aa).

Residues 1–56 (MDAKLLLLPFPSPPATLHHHPPPPKSLFLGASLPLLHPPPPLRLLRPGAPRRLAVV) constitute a chloroplast transit peptide. In terms of domain architecture, PORR spans 65 to 393 (KEIPFDNVIQ…LKEKMRALVA (329 aa)). Disordered regions lie at residues 402 to 431 (VPAT…DEDE) and 444 to 509 (SGGK…RERW). Acidic residues predominate over residues 461 to 474 (ENDDSPPDFEDDDG).

It is found in the plastid. It localises to the chloroplast. In terms of biological role, RNA-binding protein involved in group II intron splicing. Binds specific group II introns and promotes their splicing. Functions in the context of a heterodimer with the ribonuclease III domain-containing protein RNC1. In Oryza sativa subsp. japonica (Rice), this protein is Protein WHAT'S THIS FACTOR 1 homolog, chloroplastic.